Here is a 96-residue protein sequence, read N- to C-terminus: Aspartyl/glutamyl-tRNA(Asn/Gln) amidotransferase subunit C (96 aa).

Belongs to the GatC family. Heterotrimer of A, B and C subunits.

It carries out the reaction L-glutamyl-tRNA(Gln) + L-glutamine + ATP + H2O = L-glutaminyl-tRNA(Gln) + L-glutamate + ADP + phosphate + H(+). It catalyses the reaction L-aspartyl-tRNA(Asn) + L-glutamine + ATP + H2O = L-asparaginyl-tRNA(Asn) + L-glutamate + ADP + phosphate + 2 H(+). Allows the formation of correctly charged Asn-tRNA(Asn) or Gln-tRNA(Gln) through the transamidation of misacylated Asp-tRNA(Asn) or Glu-tRNA(Gln) in organisms which lack either or both of asparaginyl-tRNA or glutaminyl-tRNA synthetases. The reaction takes place in the presence of glutamine and ATP through an activated phospho-Asp-tRNA(Asn) or phospho-Glu-tRNA(Gln). The polypeptide is Aspartyl/glutamyl-tRNA(Asn/Gln) amidotransferase subunit C (Herpetosiphon aurantiacus (strain ATCC 23779 / DSM 785 / 114-95)).